Reading from the N-terminus, the 437-residue chain is Elongation factor 1-gamma (437 aa).

A2 carries the N-acetylalanine modification. Residues 2 to 87 (AAGTLYTYPE…YVSNEELRGS (86 aa)) enclose the GST N-terminal domain. Positions 88 to 216 (TPEAAAQVVQ…VKLCEKMAQF (129 aa)) constitute a GST C-terminal domain. Residues K147 and K212 each carry the N6-acetyllysine modification. Residues 221 to 254 (FAESQPKKDTPRKEKGSREEKQKPQAERKEEKKA) are compositionally biased toward basic and acidic residues. The tract at residues 221–268 (FAESQPKKDTPRKEKGSREEKQKPQAERKEEKKAAAPAPEEEMDECEQ) is disordered. K253 participates in a covalent cross-link: Glycyl lysine isopeptide (Lys-Gly) (interchain with G-Cter in SUMO1). One can recognise an EF-1-gamma C-terminal domain in the interval 276–437 (AKDPFAHLPK…KAFNQGKIFK (162 aa)). K285 participates in a covalent cross-link: Glycyl lysine isopeptide (Lys-Gly) (interchain with G-Cter in SUMO2). N6-acetyllysine is present on K401. Residue K434 is modified to N6-acetyllysine; alternate. K434 bears the N6-malonyllysine; alternate mark.

In terms of assembly, EF-1 is composed of four subunits: alpha, beta, delta, and gamma.

In terms of biological role, probably plays a role in anchoring the complex to other cellular components. The chain is Elongation factor 1-gamma (EEF1G) from Equus caballus (Horse).